A 635-amino-acid chain; its full sequence is Chaperone protein DnaK (635 aa).

T198 carries the phosphothreonine; by autocatalysis modification. A disordered region spans residues 597 to 635 (LYEQDQANNERHDTPETEKAEGDNVVDAEFQEIDDQDKK). Over residues 604–618 (NNERHDTPETEKAEG) the composition is skewed to basic and acidic residues. Acidic residues predominate over residues 620 to 635 (NVVDAEFQEIDDQDKK).

The protein belongs to the heat shock protein 70 family.

In terms of biological role, acts as a chaperone. The protein is Chaperone protein DnaK of Zymomonas mobilis subsp. mobilis (strain ATCC 31821 / ZM4 / CP4).